The primary structure comprises 239 residues: UDP-2,3-diacylglucosamine hydrolase (239 aa).

Mn(2+) is bound by residues aspartate 8, histidine 10, aspartate 41, asparagine 79, and histidine 114. A substrate-binding site is contributed by 79–80 (NR). 5 residues coordinate substrate: aspartate 122, serine 160, asparagine 164, lysine 167, and histidine 195. Histidine 195 and histidine 197 together coordinate Mn(2+).

This sequence belongs to the LpxH family. Mn(2+) is required as a cofactor.

The protein localises to the cell inner membrane. It catalyses the reaction UDP-2-N,3-O-bis[(3R)-3-hydroxytetradecanoyl]-alpha-D-glucosamine + H2O = 2-N,3-O-bis[(3R)-3-hydroxytetradecanoyl]-alpha-D-glucosaminyl 1-phosphate + UMP + 2 H(+). The protein operates within glycolipid biosynthesis; lipid IV(A) biosynthesis; lipid IV(A) from (3R)-3-hydroxytetradecanoyl-[acyl-carrier-protein] and UDP-N-acetyl-alpha-D-glucosamine: step 4/6. Hydrolyzes the pyrophosphate bond of UDP-2,3-diacylglucosamine to yield 2,3-diacylglucosamine 1-phosphate (lipid X) and UMP by catalyzing the attack of water at the alpha-P atom. Involved in the biosynthesis of lipid A, a phosphorylated glycolipid that anchors the lipopolysaccharide to the outer membrane of the cell. This chain is UDP-2,3-diacylglucosamine hydrolase, found in Sodalis glossinidius (strain morsitans).